A 131-amino-acid polypeptide reads, in one-letter code: Fumarate reductase subunit C (131 aa).

The next 3 membrane-spanning stretches (helical) occupy residues 30–50 (EGTA…LFAL), 57–77 (WMGF…LIAL), and 109–129 (IIKG…YVAL).

Belongs to the FrdC family. In terms of assembly, part of an enzyme complex containing four subunits: a flavoprotein (FrdA), an iron-sulfur protein (FrdB), and two hydrophobic anchor proteins (FrdC and FrdD).

The protein resides in the cell inner membrane. Functionally, two distinct, membrane-bound, FAD-containing enzymes are responsible for the catalysis of fumarate and succinate interconversion; fumarate reductase is used in anaerobic growth, and succinate dehydrogenase is used in aerobic growth. Anchors the catalytic components of the fumarate reductase complex to the cell inner membrane, binds quinones. This Citrobacter koseri (strain ATCC BAA-895 / CDC 4225-83 / SGSC4696) protein is Fumarate reductase subunit C.